A 296-amino-acid chain; its full sequence is Protoheme IX farnesyltransferase (296 aa).

The Cytoplasmic segment spans residues 1–9 (MIFKQYLQV). The helical transmembrane segment at 10-28 (TKPGIIFGNLISVIGGFLL) threads the bilayer. At 29 to 37 (ASKGSIDYP) the chain is on the periplasmic side. A helical membrane pass occupies residues 38–56 (LFIYTLVGVSLVVASGCVF). At 57–78 (NNYIDRDIDRKMERTKNRVLVK) the chain is on the cytoplasmic side. A helical membrane pass occupies residues 79–97 (GLISPAVSLVYATLLGIAG). The Periplasmic portion of the chain corresponds to 98-107 (FMLLWFGANP). The helical transmembrane segment at 108 to 126 (LACWLGVMGFVVYVGVYSL) threads the bilayer. At 127 to 197 (YMKRHSVYGT…YQAANIPVLP (71 aa)) the chain is on the cytoplasmic side. The helical transmembrane segment at 198 to 216 (VVKGISVAKNHITLYIIAF) threads the bilayer. At 217-228 (AVATLMLSLGGY) the chain is on the periplasmic side. A helical transmembrane segment spans residues 229–247 (AGYKYLVVAAAVSVWWLGM). Residues 248-268 (ALRGYKVADDRIWARKLFGFS) lie on the Cytoplasmic side of the membrane. A helical membrane pass occupies residues 269 to 287 (IIAITALSVMMSVDFMVPD). At 288 to 296 (SHTLLAAVW) the chain is on the periplasmic side.

It belongs to the UbiA prenyltransferase family. Protoheme IX farnesyltransferase subfamily.

It localises to the cell inner membrane. The catalysed reaction is heme b + (2E,6E)-farnesyl diphosphate + H2O = Fe(II)-heme o + diphosphate. The protein operates within porphyrin-containing compound metabolism; heme O biosynthesis; heme O from protoheme: step 1/1. Its function is as follows. Converts heme B (protoheme IX) to heme O by substitution of the vinyl group on carbon 2 of heme B porphyrin ring with a hydroxyethyl farnesyl side group. This chain is Protoheme IX farnesyltransferase, found in Escherichia coli O1:K1 / APEC.